A 323-amino-acid polypeptide reads, in one-letter code: Glyoxylate/hydroxypyruvate reductase HPR3 (323 aa).

NADP(+)-binding positions include 160–163, 182–184, and 238–240; these read LGSI, SRS, and VGR. Catalysis depends on residues Arg-240 and Glu-269. His-287 acts as the Proton donor in catalysis. An NADP(+)-binding site is contributed by 287–289; sequence HFA.

It belongs to the D-isomer specific 2-hydroxyacid dehydrogenase family. GyaR subfamily. As to quaternary structure, homodimer.

The enzyme catalyses glycolate + NADP(+) = glyoxylate + NADPH + H(+). The catalysed reaction is (R)-glycerate + NADP(+) = 3-hydroxypyruvate + NADPH + H(+). Its activity is regulated as follows. Inhibited by oxalate. Catalyzes the NADPH-dependent reduction of glyoxylate and hydroxypyruvate (HP) into glycolate and glycerate. Mostly active in the presence of NADPH and glyoxylate. This chain is Glyoxylate/hydroxypyruvate reductase HPR3 (HPR3), found in Arabidopsis thaliana (Mouse-ear cress).